The sequence spans 193 residues: Dual-action ribosomal maturation protein DarP (193 aa).

The segment covering Met-1–Glu-10 has biased composition (basic and acidic residues). Disordered regions lie at residues Met-1–Arg-20 and Gln-171–Glu-193. Acidic residues predominate over residues Gly-181–Glu-193.

This sequence belongs to the DarP family.

The protein resides in the cytoplasm. Functionally, member of a network of 50S ribosomal subunit biogenesis factors which assembles along the 30S-50S interface, preventing incorrect 23S rRNA structures from forming. Promotes peptidyl transferase center (PTC) maturation. This is Dual-action ribosomal maturation protein DarP from Xanthomonas oryzae pv. oryzae (strain KACC10331 / KXO85).